A 74-amino-acid polypeptide reads, in one-letter code: UPF0435 protein Bcer98_0391 (74 aa).

This sequence belongs to the UPF0435 family.

This is UPF0435 protein Bcer98_0391 from Bacillus cytotoxicus (strain DSM 22905 / CIP 110041 / 391-98 / NVH 391-98).